Reading from the N-terminus, the 204-residue chain is Large ribosomal subunit protein uL4 (204 aa).

The disordered stretch occupies residues 56–79 (VSGTTAKPYGQKRTGRARQGSLRS).

It belongs to the universal ribosomal protein uL4 family. Part of the 50S ribosomal subunit.

In terms of biological role, one of the primary rRNA binding proteins, this protein initially binds near the 5'-end of the 23S rRNA. It is important during the early stages of 50S assembly. It makes multiple contacts with different domains of the 23S rRNA in the assembled 50S subunit and ribosome. Functionally, forms part of the polypeptide exit tunnel. The polypeptide is Large ribosomal subunit protein uL4 (Wolbachia pipientis subsp. Culex pipiens (strain wPip)).